The chain runs to 297 residues: Palmitoyl-protein thioesterase ABHD10, mitochondrial (297 aa).

The N-terminal 43 residues, 1-43 (MAAWAPCRRWGWAAVSFGRHPGLSASLARKPPRAWWLSACRQK), are a transit peptide targeting the mitochondrion. Positions 69–196 (IIFIPGYLSN…EIEMKGEWTL (128 aa)) constitute an AB hydrolase-1 domain. Active-site charge relay system residues include S143, D240, and H270.

This sequence belongs to the AB hydrolase superfamily.

It is found in the mitochondrion. The catalysed reaction is S-hexadecanoyl-L-cysteinyl-[protein] + H2O = L-cysteinyl-[protein] + hexadecanoate + H(+). It carries out the reaction mycophenolic acid O-acyl-beta-D-glucuronide + H2O = mycophenolate + D-glucuronate + H(+). With respect to regulation, inhibited by palmostatin-B. In terms of biological role, acts as an acyl-protein thioesterase that hydrolyzes fatty acids from acylated residues in proteins. Regulates the mitochondrial S-depalmitoylation of the nucleophilic active site residue of peroxiredoxin-5/PRDX5, a key antioxidant protein, therefore modulating mitochondrial antioxidant ability. Also catalyzes the deglucuronidation of mycophenolic acid acyl-glucuronide, an active metabolite of the immunosuppressant drug mycophenolate. This is Palmitoyl-protein thioesterase ABHD10, mitochondrial from Mus musculus (Mouse).